Reading from the N-terminus, the 539-residue chain is MNSSSSTTTTDTLHSFMEASALLIDQYFLGWIFAFLFGFLLLLNFKRKREKNNSTEFGTDDSNGYYTPENIAGSTDVIIVGAGVAGSALAYTLANDGRRVHVIERDLTEQDRIVGELLQPGGYLKLIELGLEDCVNEIDAQRVFGYALYMDGKNTRLSYPLEKFHSDVAGRSFHNGRFVQRMREKAASLPNVRMEQGTVTSLVEKKGSVKGVQYKTKDGQELSAFAPLTIVCDGCFSNLRRSLCNPKVEVPSCFVGLILENIDLPHINHGHVILADPSPILFYKISSTEIRCLVDVPGQKVPCISNGELANYLKTVVAPQVPKQLYNSFIAAVDKGNIRTMPNRSMPADPHPTPGALLLGDAFNMRHPLTGGGMTVALSDIVLIRDLLRPLRDLHDSSTLCKYLESFYTLRKPVASTINTLAGALYKVFCASPDKARQEMRNACFDYLSLGGICSQGPIALLSGLNPRPISLFLHFFAVAIYGVGRLLIPFPSPKRMWLGARLILGASGIIFPIIKSEGLRQMFFPAIVPAYYRAPPIH.

Transmembrane regions (helical) follow at residues 22–42 (LLID…FLLL) and 71–91 (IAGS…ALAY). FAD-binding positions include 84-85 (VA), 104-105 (ER), R112, R183, V199, D361, and M374. The helical transmembrane segment at 472–492 (LFLHFFAVAIYGVGRLLIPFP) threads the bilayer.

It belongs to the squalene monooxygenase family. FAD is required as a cofactor. In terms of tissue distribution, mostly expressed in flower buds and leaves, and, to a lower extent, at high levels thought, in roots and petioles. In petioles, preferentially observed in vascular bundle tissue (phloem cells and parenchymatous cells near xylem) and resin ducts.

The protein localises to the microsome membrane. It localises to the endoplasmic reticulum membrane. The enzyme catalyses squalene + reduced [NADPH--hemoprotein reductase] + O2 = (S)-2,3-epoxysqualene + oxidized [NADPH--hemoprotein reductase] + H2O + H(+). It functions in the pathway terpene metabolism; lanosterol biosynthesis; lanosterol from farnesyl diphosphate: step 2/3. Component of the triterpene saponins (e.g. ginsenosides or panaxosides) and phytosterols biosynthetic pathways. Catalyzes the first oxygenation step in sterol biosynthesis and is suggested to be one of the rate-limiting enzymes in this pathway. The protein is Squalene monooxygenase SE1 of Panax ginseng (Korean ginseng).